Here is a 146-residue protein sequence, read N- to C-terminus: Hemoglobin subunit theta (146 aa).

The region spanning 2-146 (HFTAEEKSVI…VATALAHKYH (145 aa)) is the Globin domain. Positions 63 and 92 each coordinate heme b.

The protein belongs to the globin family.

This chain is Hemoglobin subunit theta, found in Sus scrofa (Pig).